The primary structure comprises 206 residues: Imidazoleglycerol-phosphate dehydratase (206 aa).

The protein belongs to the imidazoleglycerol-phosphate dehydratase family.

It localises to the cytoplasm. The enzyme catalyses D-erythro-1-(imidazol-4-yl)glycerol 3-phosphate = 3-(imidazol-4-yl)-2-oxopropyl phosphate + H2O. It functions in the pathway amino-acid biosynthesis; L-histidine biosynthesis; L-histidine from 5-phospho-alpha-D-ribose 1-diphosphate: step 6/9. This is Imidazoleglycerol-phosphate dehydratase from Cutibacterium acnes (strain DSM 16379 / KPA171202) (Propionibacterium acnes).